A 387-amino-acid polypeptide reads, in one-letter code: Probable tRNA sulfurtransferase (387 aa).

The THUMP domain occupies 67 to 167; it reads SLLKNLFTRL…KEHFLIISES (101 aa). ATP is bound by residues 185–186, 210–211, R269, G287, and Q296; these read LL and TF.

This sequence belongs to the ThiI family.

The protein resides in the cytoplasm. The catalysed reaction is [ThiI sulfur-carrier protein]-S-sulfanyl-L-cysteine + a uridine in tRNA + 2 reduced [2Fe-2S]-[ferredoxin] + ATP + H(+) = [ThiI sulfur-carrier protein]-L-cysteine + a 4-thiouridine in tRNA + 2 oxidized [2Fe-2S]-[ferredoxin] + AMP + diphosphate. The enzyme catalyses [ThiS sulfur-carrier protein]-C-terminal Gly-Gly-AMP + S-sulfanyl-L-cysteinyl-[cysteine desulfurase] + AH2 = [ThiS sulfur-carrier protein]-C-terminal-Gly-aminoethanethioate + L-cysteinyl-[cysteine desulfurase] + A + AMP + 2 H(+). It functions in the pathway cofactor biosynthesis; thiamine diphosphate biosynthesis. Its function is as follows. Catalyzes the ATP-dependent transfer of a sulfur to tRNA to produce 4-thiouridine in position 8 of tRNAs, which functions as a near-UV photosensor. Also catalyzes the transfer of sulfur to the sulfur carrier protein ThiS, forming ThiS-thiocarboxylate. This is a step in the synthesis of thiazole, in the thiamine biosynthesis pathway. The sulfur is donated as persulfide by IscS. The polypeptide is Probable tRNA sulfurtransferase (Mycoplasma pneumoniae (strain ATCC 29342 / M129 / Subtype 1) (Mycoplasmoides pneumoniae)).